Reading from the N-terminus, the 889-residue chain is Alanine--tRNA ligase (889 aa).

Zn(2+)-binding residues include histidine 587, histidine 591, cysteine 691, and histidine 695. Disordered regions lie at residues glutamine 734 to lysine 760 and alanine 866 to glycine 889. Residues aspartate 872 to serine 881 are compositionally biased toward basic and acidic residues.

This sequence belongs to the class-II aminoacyl-tRNA synthetase family. Requires Zn(2+) as cofactor.

Its subcellular location is the cytoplasm. It catalyses the reaction tRNA(Ala) + L-alanine + ATP = L-alanyl-tRNA(Ala) + AMP + diphosphate. Catalyzes the attachment of alanine to tRNA(Ala) in a two-step reaction: alanine is first activated by ATP to form Ala-AMP and then transferred to the acceptor end of tRNA(Ala). Also edits incorrectly charged Ser-tRNA(Ala) and Gly-tRNA(Ala) via its editing domain. The protein is Alanine--tRNA ligase of Nitrosopumilus maritimus (strain SCM1).